A 283-amino-acid polypeptide reads, in one-letter code: Pantothenate synthetase (283 aa).

ATP is bound at residue 30 to 37 (MGNLHLGH). The active-site Proton donor is the His-37. Gln-61 lines the (R)-pantoate pocket. Residue Gln-61 coordinates beta-alanine. 149-152 (GQKD) provides a ligand contact to ATP. Residue Gln-155 participates in (R)-pantoate binding. Residues Ile-178 and 186 to 189 (MSSR) each bind ATP.

Belongs to the pantothenate synthetase family. As to quaternary structure, homodimer.

The protein localises to the cytoplasm. It carries out the reaction (R)-pantoate + beta-alanine + ATP = (R)-pantothenate + AMP + diphosphate + H(+). It functions in the pathway cofactor biosynthesis; (R)-pantothenate biosynthesis; (R)-pantothenate from (R)-pantoate and beta-alanine: step 1/1. Catalyzes the condensation of pantoate with beta-alanine in an ATP-dependent reaction via a pantoyl-adenylate intermediate. The polypeptide is Pantothenate synthetase (Shewanella pealeana (strain ATCC 700345 / ANG-SQ1)).